Consider the following 275-residue polypeptide: MSKQTQTTRKTVKDIAAAKGATPLVMLTAYDAPTAAILDPHCDILLVGDSLGMVVHGLPSTVGVTMEMMILHGQAVMRGASQAMVVVDMPFGSYETNADQAFLNAVRIMKETGCQAIKIESGAYAAGQIAHLVERGIPVMGHIGLRPQAINVDGGFRAKGRTEDERDRVIAEARAAADAGAFCIVIEGVAEDLAAAITAEVSCPTIGIGASAACDGQVLVTQDMLGLFDWTPKFVRRYADLREVVDKAAAEYAADVRARRFPGTAETYSLRKQGS.

Asp-49 and Asp-88 together coordinate Mg(2+). Residues Asp-49–Ser-50, Asp-88, and Lys-118 each bind 3-methyl-2-oxobutanoate. Glu-120 lines the Mg(2+) pocket. Glu-187 serves as the catalytic Proton acceptor.

The protein belongs to the PanB family. As to quaternary structure, homodecamer; pentamer of dimers. The cofactor is Mg(2+).

The protein resides in the cytoplasm. It carries out the reaction 3-methyl-2-oxobutanoate + (6R)-5,10-methylene-5,6,7,8-tetrahydrofolate + H2O = 2-dehydropantoate + (6S)-5,6,7,8-tetrahydrofolate. It functions in the pathway cofactor biosynthesis; (R)-pantothenate biosynthesis; (R)-pantoate from 3-methyl-2-oxobutanoate: step 1/2. In terms of biological role, catalyzes the reversible reaction in which hydroxymethyl group from 5,10-methylenetetrahydrofolate is transferred onto alpha-ketoisovalerate to form ketopantoate. The sequence is that of 3-methyl-2-oxobutanoate hydroxymethyltransferase from Hyphomonas neptunium (strain ATCC 15444).